Reading from the N-terminus, the 312-residue chain is DNA-directed RNA polymerase subunit alpha (312 aa).

The tract at residues Met1–Thr229 is alpha N-terminal domain (alpha-NTD). Positions Ile236–Val312 are alpha C-terminal domain (alpha-CTD).

This sequence belongs to the RNA polymerase alpha chain family. In terms of assembly, in cyanobacteria the RNAP catalytic core is composed of 2 alpha, 1 beta, 1 beta', 1 gamma and 1 omega subunit. When a sigma factor is associated with the core the holoenzyme is formed, which can initiate transcription.

The catalysed reaction is RNA(n) + a ribonucleoside 5'-triphosphate = RNA(n+1) + diphosphate. In terms of biological role, DNA-dependent RNA polymerase catalyzes the transcription of DNA into RNA using the four ribonucleoside triphosphates as substrates. This is DNA-directed RNA polymerase subunit alpha from Synechococcus sp. (strain CC9311).